The chain runs to 939 residues: Translation initiation factor IF-2 (939 aa).

A disordered region spans residues 57–274 (RLKPAAPAAP…APTKKNEQKI (218 aa)). 2 stretches are compositionally biased toward basic and acidic residues: residues 83-122 (MEPK…KESV) and 129-138 (LEQEPPKEEL). 2 stretches are compositionally biased toward polar residues: residues 146-158 (ESAS…SNPL) and 170-180 (VATTLATQTDA). Over residues 208–227 (KRSEEPAPKADRPSLEEART) the composition is skewed to basic and acidic residues. The span at 252-262 (ARKKKKEKKKP) shows a compositional bias: basic residues. In terms of domain architecture, tr-type G spans 438-607 (ERPPVVTIMG…LVQSELLELK (170 aa)). The interval 447–454 (GHVDHGKT) is G1. 447–454 (GHVDHGKT) is a binding site for GTP. Positions 472–476 (GITQH) are G2. The G3 stretch occupies residues 493 to 496 (DTPG). GTP is bound by residues 493–497 (DTPGH) and 547–550 (NKVD). The tract at residues 547–550 (NKVD) is G4. The segment at 583–585 (SAK) is G5.

This sequence belongs to the TRAFAC class translation factor GTPase superfamily. Classic translation factor GTPase family. IF-2 subfamily.

It localises to the cytoplasm. Functionally, one of the essential components for the initiation of protein synthesis. Protects formylmethionyl-tRNA from spontaneous hydrolysis and promotes its binding to the 30S ribosomal subunits. Also involved in the hydrolysis of GTP during the formation of the 70S ribosomal complex. The protein is Translation initiation factor IF-2 of Wolinella succinogenes (strain ATCC 29543 / DSM 1740 / CCUG 13145 / JCM 31913 / LMG 7466 / NCTC 11488 / FDC 602W) (Vibrio succinogenes).